The following is a 123-amino-acid chain: Ribonuclease P protein component (123 aa).

This sequence belongs to the RnpA family. In terms of assembly, consists of a catalytic RNA component (M1 or rnpB) and a protein subunit.

The catalysed reaction is Endonucleolytic cleavage of RNA, removing 5'-extranucleotides from tRNA precursor.. RNaseP catalyzes the removal of the 5'-leader sequence from pre-tRNA to produce the mature 5'-terminus. It can also cleave other RNA substrates such as 4.5S RNA. The protein component plays an auxiliary but essential role in vivo by binding to the 5'-leader sequence and broadening the substrate specificity of the ribozyme. The chain is Ribonuclease P protein component from Streptomyces bikiniensis.